Consider the following 108-residue polypeptide: uncharacterized protein (108 aa).

This is an uncharacterized protein from Acanthamoeba polyphaga (Amoeba).